Reading from the N-terminus, the 271-residue chain is Formamidopyrimidine-DNA glycosylase (271 aa).

The active-site Schiff-base intermediate with DNA is the proline 2. Glutamate 3 (proton donor) is an active-site residue. Residue lysine 58 is the Proton donor; for beta-elimination activity of the active site. DNA-binding residues include histidine 91, arginine 110, and arginine 152. Residues 237–271 (WVYGRAGQSCRQCGELVSKTRQGQRSTFFCARCQH) form an FPG-type zinc finger. The Proton donor; for delta-elimination activity role is filled by arginine 261.

Belongs to the FPG family. As to quaternary structure, monomer. Requires Zn(2+) as cofactor.

The enzyme catalyses Hydrolysis of DNA containing ring-opened 7-methylguanine residues, releasing 2,6-diamino-4-hydroxy-5-(N-methyl)formamidopyrimidine.. The catalysed reaction is 2'-deoxyribonucleotide-(2'-deoxyribose 5'-phosphate)-2'-deoxyribonucleotide-DNA = a 3'-end 2'-deoxyribonucleotide-(2,3-dehydro-2,3-deoxyribose 5'-phosphate)-DNA + a 5'-end 5'-phospho-2'-deoxyribonucleoside-DNA + H(+). In terms of biological role, involved in base excision repair of DNA damaged by oxidation or by mutagenic agents. Acts as a DNA glycosylase that recognizes and removes damaged bases. Has a preference for oxidized purines, such as 7,8-dihydro-8-oxoguanine (8-oxoG). Has AP (apurinic/apyrimidinic) lyase activity and introduces nicks in the DNA strand. Cleaves the DNA backbone by beta-delta elimination to generate a single-strand break at the site of the removed base with both 3'- and 5'-phosphates. The protein is Formamidopyrimidine-DNA glycosylase of Nitrosomonas europaea (strain ATCC 19718 / CIP 103999 / KCTC 2705 / NBRC 14298).